The following is a 402-amino-acid chain: CCA-adding enzyme (402 aa).

Positions 32 and 35 each coordinate ATP. Positions 32 and 35 each coordinate CTP. Mg(2+)-binding residues include aspartate 45 and aspartate 47. ATP is bound by residues arginine 116, aspartate 159, arginine 162, arginine 165, and arginine 168. CTP is bound by residues arginine 116, aspartate 159, arginine 162, arginine 165, and arginine 168.

The protein belongs to the tRNA nucleotidyltransferase/poly(A) polymerase family. Bacterial CCA-adding enzyme type 3 subfamily. In terms of assembly, homodimer. The cofactor is Mg(2+).

The enzyme catalyses a tRNA precursor + 2 CTP + ATP = a tRNA with a 3' CCA end + 3 diphosphate. It carries out the reaction a tRNA with a 3' CCA end + 2 CTP + ATP = a tRNA with a 3' CCACCA end + 3 diphosphate. Catalyzes the addition and repair of the essential 3'-terminal CCA sequence in tRNAs without using a nucleic acid template. Adds these three nucleotides in the order of C, C, and A to the tRNA nucleotide-73, using CTP and ATP as substrates and producing inorganic pyrophosphate. tRNA 3'-terminal CCA addition is required both for tRNA processing and repair. Also involved in tRNA surveillance by mediating tandem CCA addition to generate a CCACCA at the 3' terminus of unstable tRNAs. While stable tRNAs receive only 3'-terminal CCA, unstable tRNAs are marked with CCACCA and rapidly degraded. This chain is CCA-adding enzyme, found in Streptococcus pyogenes serotype M3 (strain ATCC BAA-595 / MGAS315).